Consider the following 175-residue polypeptide: Peptide deformylase (175 aa).

Residues Cys-98 and His-140 each contribute to the Fe cation site. Glu-141 is an active-site residue. His-144 contacts Fe cation.

The protein belongs to the polypeptide deformylase family. Fe(2+) is required as a cofactor.

It catalyses the reaction N-terminal N-formyl-L-methionyl-[peptide] + H2O = N-terminal L-methionyl-[peptide] + formate. Its function is as follows. Removes the formyl group from the N-terminal Met of newly synthesized proteins. Requires at least a dipeptide for an efficient rate of reaction. N-terminal L-methionine is a prerequisite for activity but the enzyme has broad specificity at other positions. This is Peptide deformylase from Bradyrhizobium sp. (strain BTAi1 / ATCC BAA-1182).